The chain runs to 185 residues: Elongation factor P (185 aa).

This sequence belongs to the elongation factor P family.

Its subcellular location is the cytoplasm. It functions in the pathway protein biosynthesis; polypeptide chain elongation. In terms of biological role, involved in peptide bond synthesis. Stimulates efficient translation and peptide-bond synthesis on native or reconstituted 70S ribosomes in vitro. Probably functions indirectly by altering the affinity of the ribosome for aminoacyl-tRNA, thus increasing their reactivity as acceptors for peptidyl transferase. The protein is Elongation factor P of Oleidesulfovibrio alaskensis (strain ATCC BAA-1058 / DSM 17464 / G20) (Desulfovibrio alaskensis).